Reading from the N-terminus, the 159-residue chain is Keratin-associated protein 6-2 (159 aa).

A 66 X 2 AA repeats of G-[YCGS] region spans residues 11-147 (GYGCGYGSGY…SYYRSGCCGY (137 aa)).

The protein belongs to the KRTAP type 6 family. As to quaternary structure, interacts with hair keratins. In terms of tissue distribution, expressed in skin during two hair growth cycles. Expression restricted to the cortical cells of hair follicles, appearing first in the cortical cells processing the flat nuclei located a few cells above the dermal papilla.

In the hair cortex, hair keratin intermediate filaments are embedded in an interfilamentous matrix, consisting of hair keratin-associated proteins (KRTAP), which are essential for the formation of a rigid and resistant hair shaft through their extensive disulfide bond cross-linking with abundant cysteine residues of hair keratins. The matrix proteins include the high-sulfur and high-glycine-tyrosine keratins. This is Keratin-associated protein 6-2 from Mus musculus (Mouse).